The chain runs to 160 residues: SsrA-binding protein (160 aa).

A compositionally biased stretch (basic and acidic residues) spans 138 to 148; that stretch reads KRDDIKDREWQ. A disordered region spans residues 138 to 160; that stretch reads KRDDIKDREWQTAKSRIMKHANR.

It belongs to the SmpB family.

The protein resides in the cytoplasm. Required for rescue of stalled ribosomes mediated by trans-translation. Binds to transfer-messenger RNA (tmRNA), required for stable association of tmRNA with ribosomes. tmRNA and SmpB together mimic tRNA shape, replacing the anticodon stem-loop with SmpB. tmRNA is encoded by the ssrA gene; the 2 termini fold to resemble tRNA(Ala) and it encodes a 'tag peptide', a short internal open reading frame. During trans-translation Ala-aminoacylated tmRNA acts like a tRNA, entering the A-site of stalled ribosomes, displacing the stalled mRNA. The ribosome then switches to translate the ORF on the tmRNA; the nascent peptide is terminated with the 'tag peptide' encoded by the tmRNA and targeted for degradation. The ribosome is freed to recommence translation, which seems to be the essential function of trans-translation. The protein is SsrA-binding protein of Serratia proteamaculans (strain 568).